Reading from the N-terminus, the 187-residue chain is Acireductone dioxygenase (187 aa).

4 residues coordinate Fe(2+): H90, H92, E96, and H135. Ni(2+) is bound by residues H90, H92, E96, and H135.

The protein belongs to the acireductone dioxygenase (ARD) family. Fe(2+) serves as cofactor. Requires Ni(2+) as cofactor.

It is found in the cytoplasm. Its subcellular location is the nucleus. It carries out the reaction 1,2-dihydroxy-5-(methylsulfanyl)pent-1-en-3-one + O2 = 4-methylsulfanyl-2-oxobutanoate + formate + 2 H(+). The catalysed reaction is 1,2-dihydroxy-5-(methylsulfanyl)pent-1-en-3-one + O2 = 3-(methylsulfanyl)propanoate + CO + formate + 2 H(+). Its pathway is amino-acid biosynthesis; L-methionine biosynthesis via salvage pathway; L-methionine from S-methyl-5-thio-alpha-D-ribose 1-phosphate: step 5/6. In terms of biological role, catalyzes 2 different reactions between oxygen and the acireductone 1,2-dihydroxy-3-keto-5-methylthiopentene (DHK-MTPene) depending upon the metal bound in the active site. Fe-containing acireductone dioxygenase (Fe-ARD) produces formate and 2-keto-4-methylthiobutyrate (KMTB), the alpha-ketoacid precursor of methionine in the methionine recycle pathway. Ni-containing acireductone dioxygenase (Ni-ARD) produces methylthiopropionate, carbon monoxide and formate, and does not lie on the methionine recycle pathway. This chain is Acireductone dioxygenase, found in Drosophila pseudoobscura pseudoobscura (Fruit fly).